A 248-amino-acid polypeptide reads, in one-letter code: MTEATRILLGVNIDHVATLRQARGTRYPDPVKAALDAEEAGADGITVHLREDRRHIQERDVRVLKEVLQTRMNFEMGVTEEMLAFAEEIRPAHSCLVPERREELTTEGGLDVAGQEQRIRDAVRRLAAVGSEVSLFIDPDPRQIEASARVGAPAIELHTGRYADAEDPEEQARELQRVREGVALGRSLGLIVNAGHGLHYHNVEPVAAIDGINELNIGHAIVAHALFVGFRQAVAEMKALMLAAATKR.

Asparagine 12 serves as a coordination point for 3-amino-2-oxopropyl phosphate. 14-15 (DH) lines the 1-deoxy-D-xylulose 5-phosphate pocket. A 3-amino-2-oxopropyl phosphate-binding site is contributed by arginine 23. Histidine 48 serves as the catalytic Proton acceptor. Arginine 50 and histidine 55 together coordinate 1-deoxy-D-xylulose 5-phosphate. Glutamate 75 functions as the Proton acceptor in the catalytic mechanism. Threonine 105 provides a ligand contact to 1-deoxy-D-xylulose 5-phosphate. Residue histidine 196 is the Proton donor of the active site. 3-amino-2-oxopropyl phosphate-binding positions include glycine 197 and 218 to 219 (GH).

The protein belongs to the PNP synthase family. In terms of assembly, homooctamer; tetramer of dimers.

It is found in the cytoplasm. It catalyses the reaction 3-amino-2-oxopropyl phosphate + 1-deoxy-D-xylulose 5-phosphate = pyridoxine 5'-phosphate + phosphate + 2 H2O + H(+). Its pathway is cofactor biosynthesis; pyridoxine 5'-phosphate biosynthesis; pyridoxine 5'-phosphate from D-erythrose 4-phosphate: step 5/5. In terms of biological role, catalyzes the complicated ring closure reaction between the two acyclic compounds 1-deoxy-D-xylulose-5-phosphate (DXP) and 3-amino-2-oxopropyl phosphate (1-amino-acetone-3-phosphate or AAP) to form pyridoxine 5'-phosphate (PNP) and inorganic phosphate. In Pseudomonas aeruginosa (strain UCBPP-PA14), this protein is Pyridoxine 5'-phosphate synthase.